Consider the following 827-residue polypeptide: WD repeat-containing protein 27 (827 aa).

WD repeat units follow at residues N3–T57, H62–L101, L112–I151, A155–H194, Y201–L237, F292–L337, Y344–I387, K502–A542, G546–A584, A590–I629, K646–L687, E698–L740, E746–M784, and T788–A826.

In Homo sapiens (Human), this protein is WD repeat-containing protein 27 (WDR27).